Consider the following 342-residue polypeptide: Isopentenyl-diphosphate delta-isomerase (342 aa).

Substrate is bound at residue 11–12; the sequence is RK. FMN is bound by residues S68, 69 to 71, S99, and N128; that span reads SMT. 99 to 101 is a binding site for substrate; sequence SQR. Q162 contacts substrate. Residue E163 coordinates Mg(2+). Residues K194, S219, T224, 275 to 277, and 296 to 297 contribute to the FMN site; these read GVR and AK.

This sequence belongs to the IPP isomerase type 2 family. In terms of assembly, homooctamer. Dimer of tetramers. FMN is required as a cofactor. The cofactor is NADPH. Mg(2+) serves as cofactor.

The protein resides in the cytoplasm. It carries out the reaction isopentenyl diphosphate = dimethylallyl diphosphate. Involved in the biosynthesis of isoprenoids. Catalyzes the 1,3-allylic rearrangement of the homoallylic substrate isopentenyl (IPP) to its allylic isomer, dimethylallyl diphosphate (DMAPP). In Legionella pneumophila subsp. pneumophila (strain Philadelphia 1 / ATCC 33152 / DSM 7513), this protein is Isopentenyl-diphosphate delta-isomerase.